Reading from the N-terminus, the 404-residue chain is Probable tRNA sulfurtransferase (404 aa).

The THUMP domain occupies 60 to 165 (TAVAESLKQV…EEAAYLSYET (106 aa)). ATP contacts are provided by residues 183 to 184 (ML), 208 to 209 (HF), Arg-265, Gly-287, and Gln-296.

It belongs to the ThiI family.

Its subcellular location is the cytoplasm. It catalyses the reaction [ThiI sulfur-carrier protein]-S-sulfanyl-L-cysteine + a uridine in tRNA + 2 reduced [2Fe-2S]-[ferredoxin] + ATP + H(+) = [ThiI sulfur-carrier protein]-L-cysteine + a 4-thiouridine in tRNA + 2 oxidized [2Fe-2S]-[ferredoxin] + AMP + diphosphate. The catalysed reaction is [ThiS sulfur-carrier protein]-C-terminal Gly-Gly-AMP + S-sulfanyl-L-cysteinyl-[cysteine desulfurase] + AH2 = [ThiS sulfur-carrier protein]-C-terminal-Gly-aminoethanethioate + L-cysteinyl-[cysteine desulfurase] + A + AMP + 2 H(+). The protein operates within cofactor biosynthesis; thiamine diphosphate biosynthesis. Functionally, catalyzes the ATP-dependent transfer of a sulfur to tRNA to produce 4-thiouridine in position 8 of tRNAs, which functions as a near-UV photosensor. Also catalyzes the transfer of sulfur to the sulfur carrier protein ThiS, forming ThiS-thiocarboxylate. This is a step in the synthesis of thiazole, in the thiamine biosynthesis pathway. The sulfur is donated as persulfide by IscS. This is Probable tRNA sulfurtransferase from Streptococcus pneumoniae serotype 19F (strain G54).